The primary structure comprises 179 residues: Large ribosomal subunit protein uL5 (179 aa).

The protein belongs to the universal ribosomal protein uL5 family. In terms of assembly, part of the 50S ribosomal subunit; part of the 5S rRNA/L5/L18/L25 subcomplex. Contacts the 5S rRNA and the P site tRNA. Forms a bridge to the 30S subunit in the 70S ribosome.

This is one of the proteins that bind and probably mediate the attachment of the 5S RNA into the large ribosomal subunit, where it forms part of the central protuberance. In the 70S ribosome it contacts protein S13 of the 30S subunit (bridge B1b), connecting the 2 subunits; this bridge is implicated in subunit movement. Contacts the P site tRNA; the 5S rRNA and some of its associated proteins might help stabilize positioning of ribosome-bound tRNAs. The polypeptide is Large ribosomal subunit protein uL5 (Janthinobacterium sp. (strain Marseille) (Minibacterium massiliensis)).